A 1939-amino-acid chain; its full sequence is Myosin heavy chain, skeletal muscle, adult (1939 aa).

N-acetylalanine is present on Ala2. One can recognise a Myosin N-terminal SH3-like domain in the interval 34–83 (DAKSSVFVVHPKESFVKGTIQSKEGGKVTVKTEGGETLTVKEDQVFSMNP). An N6-methyllysine modification is found at Lys36. The Myosin motor domain maps to 87 to 781 (DKIEDMAMMT…LLGLLEEMRD (695 aa)). Residue Lys131 is modified to N6,N6,N6-trimethyllysine. 180-187 (GESGAGKT) contacts ATP. N6,N6,N6-trimethyllysine is present on Lys552. Residues 658–680 (LNKLMANLRSTHPHFVRCIIPNE) form an actin-binding region. His756 carries the pros-methylhistidine modification. The tract at residues 760–774 (RFGHTKVFFKAGLLG) is actin-binding. Residues 784 to 813 (LAEIITRTQARCRGFLMRVEYRRMVERRES) enclose the IQ domain. Positions 839–841 (IKP) are hinge. Residues 842 to 1939 (LLKSAESEKE…IHGKKIEEEE (1098 aa)) adopt a coiled-coil conformation.

It belongs to the TRAFAC class myosin-kinesin ATPase superfamily. Myosin family. Muscle myosin is a hexameric protein that consists of 2 heavy chain subunits (MHC), 2 alkali light chain subunits (MLC) and 2 regulatory light chain subunits (MLC-2).

It localises to the cytoplasm. It is found in the myofibril. In terms of biological role, muscle contraction. Myosin is a protein that binds to F-actin and has ATPase activity that is activated by F-actin. This Gallus gallus (Chicken) protein is Myosin heavy chain, skeletal muscle, adult.